The primary structure comprises 579 residues: Rho guanine nucleotide exchange factor 25 (579 aa).

2 disordered regions span residues 27–61 (AVPGQEGPQERDPLGPGSTKTESECTEEDQTGERE) and 172–194 (VKAQPAEEETLSQAPKNEEEQKK). The region spanning 199–375 (RSMFVLSELV…CFVPKRCNDM (177 aa)) is the DH domain. The segment at 317–338 (LGHRLQLSDLLIKPVQRIMKYQ) is important for binding to Rho GTPases. Residues 380–499 (RLRGFEGKLT…ESQTNSLGRS (120 aa)) form the PH domain. The tract at residues 472 to 498 (SQRDFLNALQSPIEYQRRESQTNSLGR) is sufficient to bind activated GNAQ. 2 disordered regions span residues 487–516 (QRRESQTNSLGRSGGPGVGSPGRMAQVSMH) and 546–579 (LSETPLTPYDPPALPTVNSPPGQARLAKLDEDEL).

Interacts with activated GNAQ and GNA11. Interacts with RHOA, CDC42 and RAC1. Interacts (via the DH domain) with POPDC1 (via the C-terminus cytoplasmic tail).

The protein resides in the cytoplasm. It localises to the myofibril. The protein localises to the sarcomere. It is found in the cell membrane. May play a role in actin cytoskeleton reorganization in different tissues since its activation induces formation of actin stress fibers. It works as a guanine nucleotide exchange factor for Rho family of small GTPases. Links specifically G alpha q/11-coupled receptors to RHOA activation. May be an important regulator of processes involved in axon and dendrite formation. In neurons seems to be an exchange factor primarily for RAC1. Involved in skeletal myogenesis. The protein is Rho guanine nucleotide exchange factor 25 (Arhgef25) of Rattus norvegicus (Rat).